Here is a 74-residue protein sequence, read N- to C-terminus: uncharacterized protein (74 aa).

This is an uncharacterized protein from Archaeoglobus fulgidus (strain ATCC 49558 / DSM 4304 / JCM 9628 / NBRC 100126 / VC-16).